A 246-amino-acid chain; its full sequence is Ribonuclease 3 (246 aa).

The 130-residue stretch at 8–137 folds into the RNase III domain; sequence ANRLKTRLGF…LLGAIYLDQG (130 aa). Residue glutamate 50 participates in Mg(2+) binding. Aspartate 54 is an active-site residue. 2 residues coordinate Mg(2+): aspartate 123 and glutamate 126. Glutamate 126 is an active-site residue. The region spanning 164-233 is the DRBM domain; sequence DYKTELQEIL…AKDAFQHLEG (70 aa). A disordered region spans residues 212-246; that stretch reads SGHSKKEAEQQAAKDAFQHLEGMGKSGHKSAGPIR.

It belongs to the ribonuclease III family. In terms of assembly, homodimer. Mg(2+) is required as a cofactor.

It localises to the cytoplasm. It carries out the reaction Endonucleolytic cleavage to 5'-phosphomonoester.. Functionally, digests double-stranded RNA. Involved in the processing of primary rRNA transcript to yield the immediate precursors to the large and small rRNAs (23S and 16S). Processes some mRNAs, and tRNAs when they are encoded in the rRNA operon. Processes pre-crRNA and tracrRNA of type II CRISPR loci if present in the organism. The protein is Ribonuclease 3 of Desulforamulus reducens (strain ATCC BAA-1160 / DSM 100696 / MI-1) (Desulfotomaculum reducens).